The following is an 875-amino-acid chain: Phosphoenolpyruvate carboxylase (875 aa).

Active-site residues include His-137 and Lys-542.

Belongs to the PEPCase type 1 family. Mg(2+) is required as a cofactor.

It carries out the reaction oxaloacetate + phosphate = phosphoenolpyruvate + hydrogencarbonate. Its function is as follows. Forms oxaloacetate, a four-carbon dicarboxylic acid source for the tricarboxylic acid cycle. This Pseudomonas entomophila (strain L48) protein is Phosphoenolpyruvate carboxylase.